A 312-amino-acid polypeptide reads, in one-letter code: Nucleosome assembly protein 1-like 4 (312 aa).

The stretch at V24–E78 forms a coiled coil. The short motif at L45–Q60 is the Nuclear export signal element. The segment at D289–A312 is disordered.

This sequence belongs to the nucleosome assembly protein (NAP) family.

The protein localises to the nucleus. Its subcellular location is the cytoplasm. Its function is as follows. May modulate chromatin structure by regulation of nucleosome assembly/disassembly. The protein is Nucleosome assembly protein 1-like 4 of Oryza sativa subsp. japonica (Rice).